The following is a 263-amino-acid chain: 3-methyl-2-oxobutanoate hydroxymethyltransferase (263 aa).

Mg(2+) is bound by residues aspartate 45 and aspartate 84. 3-methyl-2-oxobutanoate is bound by residues 45–46 (DS), aspartate 84, and lysine 112. Glutamate 114 is a binding site for Mg(2+). The Proton acceptor role is filled by glutamate 180.

The protein belongs to the PanB family. As to quaternary structure, homodecamer; pentamer of dimers. Requires Mg(2+) as cofactor.

It is found in the cytoplasm. It catalyses the reaction 3-methyl-2-oxobutanoate + (6R)-5,10-methylene-5,6,7,8-tetrahydrofolate + H2O = 2-dehydropantoate + (6S)-5,6,7,8-tetrahydrofolate. Its pathway is cofactor biosynthesis; (R)-pantothenate biosynthesis; (R)-pantoate from 3-methyl-2-oxobutanoate: step 1/2. In terms of biological role, catalyzes the reversible reaction in which hydroxymethyl group from 5,10-methylenetetrahydrofolate is transferred onto alpha-ketoisovalerate to form ketopantoate. In Citrobacter koseri (strain ATCC BAA-895 / CDC 4225-83 / SGSC4696), this protein is 3-methyl-2-oxobutanoate hydroxymethyltransferase.